Reading from the N-terminus, the 349-residue chain is DNA fragmentation factor subunit beta (349 aa).

Residues 7–83 (QPKCVKLRAL…LLTAGETWHG (77 aa)) enclose the CIDE-N domain. The tract at residues 319–349 (RSRIYRPQTGSRRKQPPRKQPPRKRPPRKRQ) is disordered. A compositionally biased stretch (basic residues) spans 329 to 349 (SRRKQPPRKQPPRKRPPRKRQ).

Heterodimer of DFFA and DFFB. Interacts with H1-1.

It localises to the cytoplasm. It is found in the nucleus. Its activity is regulated as follows. Inhibited by DFFA (DFF45). In terms of biological role, nuclease that induces DNA fragmentation and chromatin condensation during apoptosis. Degrades naked DNA and induces apoptotic morphology. The chain is DNA fragmentation factor subunit beta (Dffb) from Rattus norvegicus (Rat).